The primary structure comprises 425 residues: Serine--tRNA ligase (425 aa).

231 to 233 provides a ligand contact to L-serine; it reads TAE. 262-264 contacts ATP; it reads RSE. Glutamate 285 serves as a coordination point for L-serine. 349–352 is a binding site for ATP; it reads EISS. Serine 385 serves as a coordination point for L-serine.

It belongs to the class-II aminoacyl-tRNA synthetase family. Type-1 seryl-tRNA synthetase subfamily. As to quaternary structure, homodimer. The tRNA molecule binds across the dimer.

It is found in the cytoplasm. The enzyme catalyses tRNA(Ser) + L-serine + ATP = L-seryl-tRNA(Ser) + AMP + diphosphate + H(+). The catalysed reaction is tRNA(Sec) + L-serine + ATP = L-seryl-tRNA(Sec) + AMP + diphosphate + H(+). It participates in aminoacyl-tRNA biosynthesis; selenocysteinyl-tRNA(Sec) biosynthesis; L-seryl-tRNA(Sec) from L-serine and tRNA(Sec): step 1/1. Functionally, catalyzes the attachment of serine to tRNA(Ser). Is also able to aminoacylate tRNA(Sec) with serine, to form the misacylated tRNA L-seryl-tRNA(Sec), which will be further converted into selenocysteinyl-tRNA(Sec). This is Serine--tRNA ligase from Exiguobacterium sibiricum (strain DSM 17290 / CCUG 55495 / CIP 109462 / JCM 13490 / 255-15).